The primary structure comprises 1549 residues: Zinc finger MYM-type protein 4 (1549 aa).

N-acetylalanine is present on A2. The disordered stretch occupies residues 83-108; the sequence is VVSSDNEDEQDCSSKDNLVSSVHTDG. Residues 97 to 106 show a composition bias toward polar residues; that stretch reads KDNLVSSVHT. Residue T106 is modified to Phosphothreonine. Phosphoserine occurs at positions 109 and 121. Residues K139 and K148 each participate in a glycyl lysine isopeptide (Lys-Gly) (interchain with G-Cter in SUMO2) cross-link. S161 carries the post-translational modification Phosphoserine. Residue K195 forms a Glycyl lysine isopeptide (Lys-Gly) (interchain with G-Cter in SUMO2) linkage. S197 is subject to Phosphoserine. Residues K201 and K232 each participate in a glycyl lysine isopeptide (Lys-Gly) (interchain with G-Cter in SUMO2) cross-link. S242 bears the Phosphoserine mark. K250 is covalently cross-linked (Glycyl lysine isopeptide (Lys-Gly) (interchain with G-Cter in SUMO1); alternate). K250 is covalently cross-linked (Glycyl lysine isopeptide (Lys-Gly) (interchain with G-Cter in SUMO2); alternate). Residues 267–291 are disordered; that stretch reads GLLDRVKDEPDNAQEYSHGQQQKTQ. Residues K273, K289, K327, K400, K428, and K430 each participate in a glycyl lysine isopeptide (Lys-Gly) (interchain with G-Cter in SUMO2) cross-link. Residues 280–290 show a composition bias toward polar residues; that stretch reads QEYSHGQQQKT. 9 consecutive MYM-type zinc fingers follow at residues 362-402, 414-457, 464-499, 510-544, 554-592, 600-631, 708-742, 749-788, and 795-829; these read QLFC…PKDV, KDFC…RHEV, HKLC…GSGQ, KKFC…AEMI, ELFC…QYHL, RNFC…LSQG, FQFC…KETV, KSFC…LIQN, and EDFC…SESL. Residues K1035 and K1062 each participate in a glycyl lysine isopeptide (Lys-Gly) (interchain with G-Cter in SUMO2) cross-link. Phosphoserine is present on residues S1065 and S1072. Residues K1081 and K1128 each participate in a glycyl lysine isopeptide (Lys-Gly) (interchain with G-Cter in SUMO2) cross-link. Positions 1124–1185 are disordered; sequence DSELKPFSKG…RRGRKKSVVP (62 aa). The span at 1125 to 1135 shows a compositional bias: basic and acidic residues; it reads SELKPFSKGET. Residues 1161–1182 are compositionally biased toward basic residues; the sequence is SRTRRRHRDGFPQPRRRGRKKS. A phosphoserine mark is found at S1182 and S1257. K1432 participates in a covalent cross-link: Glycyl lysine isopeptide (Lys-Gly) (interchain with G-Cter in SUMO2). A phosphoserine mark is found at S1540, S1543, and S1548.

Its function is as follows. Plays a role in the regulation of cell morphology and cytoskeletal organization. The polypeptide is Zinc finger MYM-type protein 4 (Zmym4) (Mus musculus (Mouse)).